The sequence spans 356 residues: Heparan sulfate 2-O-sulfotransferase 1 (356 aa).

Residues 1 to 11 (MGLLRIMMPPK) lie on the Cytoplasmic side of the membrane. A helical; Signal-anchor for type II membrane protein transmembrane segment spans residues 12–28 (LQLLAVVAFAVAMLFLE). Residues 24–51 (MLFLENQIQKLEESRAKLERAIARHEVR) adopt a coiled-coil conformation. The Lumenal portion of the chain corresponds to 29-356 (NQIQKLEESR…FYEKIYPKSN (328 aa)). The adenosine 3',5'-bisphosphate site is built by lysine 83, threonine 84, alanine 85, serine 86, threonine 87, and serine 88. N-linked (GlcNAc...) asparagine glycosylation is found at asparagine 108 and asparagine 127. Catalysis depends on residues histidine 140 and histidine 142. Residues arginine 164 and serine 172 each contribute to the adenosine 3',5'-bisphosphate site. Intrachain disulfides connect cysteine 201/cysteine 209 and cysteine 222/cysteine 228. Tyrosine 279, serine 285, threonine 290, and lysine 293 together coordinate adenosine 3',5'-bisphosphate.

Belongs to the sulfotransferase 3 family. As to quaternary structure, homotrimer. Interacts with the C5-epimerase GLCE. Post-translationally, N-glycosylated.

The protein localises to the golgi apparatus membrane. Functionally, catalyzes the transfer of a sulfo group from 3'-phospho-5'-adenylyl sulfate (PAPS) to the 2-OH position of iduronic acid (IdoA) or glucuronic acid (GlcA) within the heparan sulfate (HS) chain and participates in HS biosynthesis. Required for metanephric development of kidney formation, suggesting that 2-O-sulfation within HS is essential for signaling between ureteric bud and metanephric mesenchyme. This is Heparan sulfate 2-O-sulfotransferase 1 from Cricetulus griseus (Chinese hamster).